A 491-amino-acid polypeptide reads, in one-letter code: MSRIMIQGTASSVGKSILVAALCRIFKQDGFSVCPYKSQNMSLNSYITLDGKEMGRAQVLQAYAAGLEPEVYMNPILLKPTTDKSCQVIVKGEVYGVSSAKNYYNMKKEFAPMLKEDFEELEDKFDIVVIEGAGSPAEINLRENDIVNMGLAELVDAPVVLVGDIDKGGVFASLFGTVMLLEENERKRIKGTIINKFRGDVEILKPGLSMLEERINIPCFGVVPYFNLSLEDEDGAVYFNTKVNSKIDVAVIKLPHISNFTDIDALKIEEDVSLRYITSSENFGTPDLLIIPGSKNTIGDLLYIRKNGIENKIKQYAEKNGLIFGICGGYQMLGRLIEDPFKVETELGEINGMGLLDIRTVFAEKKVTTRVQGSVIDKQIPVYGYEIHMGISSYGEKAKPFIKIENKVGIDDGAVNEGGNIMGTYIHGIFDGANFREYIINFLRDKKGIERKKSVVYEDVRNGEIDRLADIVRNSLDMNSIYSVMGIEGKK.

In terms of domain architecture, GATase cobBQ-type spans 246 to 435 (KIDVAVIKLP…IHGIFDGANF (190 aa)). Residue C327 is the Nucleophile of the active site. H427 is an active-site residue.

Belongs to the CobB/CobQ family. CobQ subfamily.

It participates in cofactor biosynthesis; adenosylcobalamin biosynthesis. Its function is as follows. Catalyzes amidations at positions B, D, E, and G on adenosylcobyrinic A,C-diamide. NH(2) groups are provided by glutamine, and one molecule of ATP is hydrogenolyzed for each amidation. This chain is Cobyric acid synthase, found in Clostridium acetobutylicum (strain ATCC 824 / DSM 792 / JCM 1419 / IAM 19013 / LMG 5710 / NBRC 13948 / NRRL B-527 / VKM B-1787 / 2291 / W).